Consider the following 607-residue polypeptide: Aspartate--tRNA(Asp/Asn) ligase (607 aa).

An L-aspartate-binding site is contributed by Glu176. Residues 200–203 (QQFK) are aspartate. Residues Arg222 and His456 each coordinate L-aspartate. 222–224 (RDE) lines the ATP pocket. Glu496 is a binding site for ATP. Arg503 contributes to the L-aspartate binding site. 548–551 (GIDR) is a binding site for ATP.

The protein belongs to the class-II aminoacyl-tRNA synthetase family. Type 1 subfamily. As to quaternary structure, homodimer.

It localises to the cytoplasm. It carries out the reaction tRNA(Asx) + L-aspartate + ATP = L-aspartyl-tRNA(Asx) + AMP + diphosphate. Functionally, aspartyl-tRNA synthetase with relaxed tRNA specificity since it is able to aspartylate not only its cognate tRNA(Asp) but also tRNA(Asn). Reaction proceeds in two steps: L-aspartate is first activated by ATP to form Asp-AMP and then transferred to the acceptor end of tRNA(Asp/Asn). The polypeptide is Aspartate--tRNA(Asp/Asn) ligase (Parvibaculum lavamentivorans (strain DS-1 / DSM 13023 / NCIMB 13966)).